Here is a 914-residue protein sequence, read N- to C-terminus: Neutral alpha-glucosidase C (914 aa).

Residue D511 is the Nucleophile of the active site. The active site involves E514. D587 (proton donor) is an active-site residue.

Belongs to the glycosyl hydrolase 31 family.

The catalysed reaction is Hydrolysis of terminal, non-reducing (1-&gt;4)-linked alpha-D-glucose residues with release of alpha-D-glucose.. Has alpha-glucosidase activity. The chain is Neutral alpha-glucosidase C (GANC) from Homo sapiens (Human).